The chain runs to 317 residues: Taste receptor type 2 member 14 (317 aa).

Topologically, residues 1–7 are extracellular; it reads MGGVIKS. The chain crosses the membrane as a helical span at residues 8 to 28; that stretch reads IFTFVLIVEFIIGNLGNSFIA. Over 29–55 the chain is Cytoplasmic; the sequence is LVNCIDWVKGRKISSVDRILTALAISK. The chain crosses the membrane as a helical span at residues 56–76; the sequence is ISLVWLIFGSWCVSVFFPALF. The Extracellular portion of the chain corresponds to 77-87; the sequence is ATEKMFRMLTN. Residues Thr-86 and Trp-89 each contribute to the cholesterol site. The helical transmembrane segment at 88-108 threads the bilayer; the sequence is IWTVINHFSVWLATGLGTFYF. The Cytoplasmic segment spans residues 109–129; that stretch reads LKIANFSNSIFLYLKWRVKKV. A helical transmembrane segment spans residues 130–150; sequence VLVLLLVTSVFLFLNIALINI. The Extracellular segment spans residues 151 to 184; it reads HINASINGYRRNKTCSSDSSNFTRFSSLIVLTST. Residues Asn-153, Asn-162, and Asn-171 are each glycosylated (N-linked (GlcNAc...) asparagine). Val-180 contributes to the cholesterol binding site. Residues 185–205 form a helical membrane-spanning segment; sequence VFIFIPFTLSLAMFLLLIFSM. Residues 206–232 lie on the Cytoplasmic side of the membrane; the sequence is WKHRKKMQHTVKRSGDASTKAHRGVKS. A helical membrane pass occupies residues 233 to 253; it reads MMTFFLLYAIFSLSFFISVWT. The Extracellular segment spans residues 254–261; sequence SERLEENL. The chain crosses the membrane as a helical span at residues 262–282; sequence IILSQVMGMAYPSCHSCVLIL. Ser-265 and Met-268 together coordinate cholesterol. At 283 to 317 the chain is on the cytoplasmic side; it reads GNKKLRQASLSVLLWLRYMFKDGEPSGHKEFRESS.

It belongs to the G-protein coupled receptor T2R family. As to quaternary structure, core component of the TAS2R14-GNAI1 complex, consisting of TAS2R14, GNAI1, GNB1 and GNG2; within the complex interacts with GNAI1. Core component of the TAS2R14-GNAT3 complex, consisting of TAS2R14, GNAT3, GNB1 and GNG2; within the complex interacts with GNAT3. Core component of the TAS2R14-GNAS2 complex, consisting of TAS2R14, GNAS2, GNB1 and GNG2; within the complex interacts with GNAS2.

It is found in the membrane. It catalyses the reaction Ca(2+)(in) = Ca(2+)(out). It carries out the reaction 3',5'-cyclic AMP(in) = 3',5'-cyclic AMP(out). Basal activity is enhanced by binding to bitter tastants, such as flufenamic acid and aristolochic acid. Regulated by cholesterol in a concentration-dependent manner. Its function is as follows. Gustducin-linked G-protein coupled receptor that plays a role in the perception of bitterness. The activity of this receptor stimulates GNAT3, activating the gustducin G-protein pathway. Likely plays a role in sensing the chemical composition of the gastrointestinal content and other extra-oral tissues via the inhibitory G-protein pathways. In Pan paniscus (Pygmy chimpanzee), this protein is Taste receptor type 2 member 14 (TAS2R14).